The chain runs to 157 residues: Cyclic pyranopterin monophosphate synthase (157 aa).

Substrate contacts are provided by residues 74–76 (MCH) and 112–113 (ME). The active site involves aspartate 127.

This sequence belongs to the MoaC family. In terms of assembly, homohexamer; trimer of dimers.

It carries out the reaction (8S)-3',8-cyclo-7,8-dihydroguanosine 5'-triphosphate = cyclic pyranopterin phosphate + diphosphate. The protein operates within cofactor biosynthesis; molybdopterin biosynthesis. Catalyzes the conversion of (8S)-3',8-cyclo-7,8-dihydroguanosine 5'-triphosphate to cyclic pyranopterin monophosphate (cPMP). This is Cyclic pyranopterin monophosphate synthase from Sulfurovum sp. (strain NBC37-1).